The chain runs to 307 residues: Malate dehydrogenase (307 aa).

NAD(+) is bound by residues 8 to 13 (GAGRVG) and Asp-33. Substrate contacts are provided by Arg-82 and Arg-88. NAD(+)-binding positions include Asn-95 and 118 to 120 (VSN). Residues Asn-120 and Arg-151 each contribute to the substrate site. His-175 acts as the Proton acceptor in catalysis.

The protein belongs to the LDH/MDH superfamily. MDH type 3 family.

The catalysed reaction is (S)-malate + NAD(+) = oxaloacetate + NADH + H(+). Catalyzes the reversible oxidation of malate to oxaloacetate. The polypeptide is Malate dehydrogenase (Thioalkalivibrio sulfidiphilus (strain HL-EbGR7)).